The sequence spans 493 residues: MKRLRFNYLLIGLITVLLALALWPSIPWYGGSTDRIAQIKSRGELRISTINSPLTYYTVNQSPAGMDYELAKRFADYLGVRLVVTVRPNLADLFDDLADDKADILAAGLIYNRERLKRFRAGPSYYSVSQQLVYRIGTSRPKNLGDLKGRLTVASGSAYLSSLREIKDRQYPDLDWAVSTDRTPDGLLQAVADGKIDYTIADSVSIGLMQRIHPQLTVAFDITEEEAVTWYTQQEANDSLNAAMLDFFSKMSEEGVIARLDEKYLGHVGTFDYVDTRTFLRSIDETLPDIRRLFEKYAKKIDWRLLAAISYQESHWDPLATSPTGVRGMMMLTRSTADSLNVSDRTDAEQSIRGGSEYMTHMMEKVPSGVPEDERIWFALAAYNMGYAHMLDARKLTEKQKGDPNSWADVKVRLPMLSQKRYYSQTTYGYARGHEAYAYVENIRKYQLSLVGYLQDRERKLAQKMAAEAELRQAYPAVEPDAALNPVSALPLP.

A signal peptide spans 1–21 (MKRLRFNYLLIGLITVLLALA). The non-LT domain stretch occupies residues 22 to 268 (LWPSIPWYGG…RLDEKYLGHV (247 aa)). Positions 269–493 (GTFDYVDTRT…LNPVSALPLP (225 aa)) are LT domain. The active site involves glutamate 313.

The protein in the N-terminal section; belongs to the bacterial solute-binding protein 3 family. This sequence in the C-terminal section; belongs to the transglycosylase Slt family.

Its subcellular location is the cell outer membrane. The enzyme catalyses Exolytic cleavage of the (1-&gt;4)-beta-glycosidic linkage between N-acetylmuramic acid (MurNAc) and N-acetylglucosamine (GlcNAc) residues in peptidoglycan, from either the reducing or the non-reducing ends of the peptidoglycan chains, with concomitant formation of a 1,6-anhydrobond in the MurNAc residue.. Functionally, murein-degrading enzyme that degrades murein glycan strands and insoluble, high-molecular weight murein sacculi, with the concomitant formation of a 1,6-anhydromuramoyl product. Lytic transglycosylases (LTs) play an integral role in the metabolism of the peptidoglycan (PG) sacculus. Their lytic action creates space within the PG sacculus to allow for its expansion as well as for the insertion of various structures such as secretion systems and flagella. The sequence is that of Membrane-bound lytic murein transglycosylase F from Erwinia tasmaniensis (strain DSM 17950 / CFBP 7177 / CIP 109463 / NCPPB 4357 / Et1/99).